The sequence spans 305 residues: Thyroxine 5-deiodinase (305 aa).

Over 1 to 43 (MPGQAGRRRLVGGGCRGSQGPLGGAATMLRSLLLHSLRLCAQT) the chain is Cytoplasmic. Residues 44–63 (ASCLVLFPRFLGTACMLWLL) traverse the membrane as a helical; Signal-anchor for type II membrane protein segment. The Extracellular portion of the chain corresponds to 64-305 (DFLCIRKHLL…QLHGPQPRRV (242 aa)). Positions 79 to 98 (GEPETEVELNSDGDEVPPDD) are disordered. Over residues 82–96 (ETEVELNSDGDEVPP) the composition is skewed to acidic residues. Residue Sec-171 is part of the active site. Residue Sec-171 is a non-standard amino acid, selenocysteine.

It belongs to the iodothyronine deiodinase family. In terms of assembly, monomer. Homodimer. May undergo minor heretodimerization with DIO1 and DIO2. As to expression, expressed in brain only.

The protein resides in the cell membrane. The protein localises to the endosome membrane. The catalysed reaction is 3,3',5'-triiodo-L-thyronine + iodide + A + H(+) = L-thyroxine + AH2. The enzyme catalyses 3,3'-diiodo-L-thyronine + iodide + A + H(+) = 3,3',5-triiodo-L-thyronine + AH2. It carries out the reaction 3-iodo-L-thyronine + iodide + A + H(+) = 3,5-diiodo-L-thyronine + AH2. It catalyses the reaction L-thyronine + iodide + A + H(+) = 3-iodo-L-thyronine + AH2. The catalysed reaction is 3',5'-diiodo-L-thyronine + iodide + A + H(+) = 3,3',5'-triiodo-L-thyronine + AH2. The enzyme catalyses 3'-iodo-L-thyronine + iodide + A + H(+) = 3,3'-diiodo-L-thyronine + AH2. It carries out the reaction 3,3',5'-triiodothyronamine + iodide + A + H(+) = 3,3',5,5'-tetraiodothyronamine + AH2. It catalyses the reaction 3',5'-diiodothyronamine + iodide + A + H(+) = 3,3',5'-triiodothyronamine + AH2. The catalysed reaction is 3,3'-diiodothyronamine + iodide + A + H(+) = 3,3',5-triiodothyronamine + AH2. The enzyme catalyses 3-iodothyronamine + iodide + A + H(+) = 3,5-diiodothyronamine + AH2. It carries out the reaction 3'-iodothyronamine + iodide + A + H(+) = 3,3'-diiodothyronamine + AH2. It catalyses the reaction thyronamine + iodide + A + H(+) = 3-iodothyronamine + AH2. Functionally, plays a crucial role in the metabolism of thyroid hormones (TH) and has specific roles in TH activation and inactivation by deiodination, particularly in different tissues. Catalyzes the deiodination of L-thyroxine (T4) to 3,3',5'-triiodothyronine (rT3), 3,5-diiodothyronine (3,5-T2) to 3-monoiodothyronine (3-T1), rT3 to 3',5'-diiodothyronine (3',5'-T2) and 3,3'-diiodothyronine (3,3'-T2) to 3'-monoiodothyronine (3'-T1) via inner-ring deiodination (IRD). Catalyzes the deiodination of 3,5,3'-triiodothyronine (T3) to 3,3'-diiodothyronine (3,3'-T2) via IRD. Catalyzes the deiodination of 3-T1 to L-thyronine (T0) via outer-ring deiodination (ORD). Catalyzes the tyrosyl ring deiodinations of 3,3',5,5'-tetraiodothyronamine, 3,3',5'-triiodothyronamine, 3,5,3'-triiodothyronamine, 3,5-diiodothyronamine, 3,3'-diiodothyronamine and 3-iodothyronamine. The chain is Thyroxine 5-deiodinase (DIO3) from Sus scrofa (Pig).